Reading from the N-terminus, the 1472-residue chain is ABC multidrug transporter atrI (1472 aa).

The disordered stretch occupies residues 1–28 (MRRSNVVPVHSLTSSTNTGRDSRGEKYD). Residues 134 to 384 (FRRETWNFRN…FERQGWFCPP (251 aa)) enclose the ABC transporter 1 domain. Residues asparagine 143, asparagine 277, asparagine 308, and asparagine 332 are each glycosylated (N-linked (GlcNAc...) asparagine). Helical transmembrane passes span 506 to 526 (ILAL…AGFY), 530 to 550 (ATLF…INSL), 580 to 600 (IPVK…LSGL), 605 to 625 (SQFF…SAVF), 639 to 659 (MTLA…VVPV), 664 to 684 (PWFK…ILIA), and 744 to 764 (FGIL…ATEL). The span at 784 to 793 (AHLKNGHEPG) shows a compositional bias: basic and acidic residues. Residues 784 to 821 (AHLKNGHEPGADEEAGAGKTVVSSSAEENKQDQGITSI) form a disordered region. Positions 804–821 (VVSSSAEENKQDQGITSI) are enriched in polar residues. The 243-residue stretch at 828–1070 (FTWRDVVYDI…TLLKYFESHG (243 aa)) folds into the ABC transporter 2 domain. An ATP-binding site is contributed by 864–871 (GVSGAGKT). 6 consecutive transmembrane segments (helical) span residues 1168 to 1188 (YIAA…FSFF), 1204 to 1224 (VFML…LFIT), 1244 to 1264 (FMIA…ILVF), 1282 to 1302 (LVLL…DFVI), 1309 to 1329 (ETAG…NGVM), and 1337 to 1357 (GFWI…GMAA). The N-linked (GlcNAc...) asparagine glycan is linked to asparagine 1402. The helical transmembrane segment at 1433–1453 (FGIFWAYVVFDIAVAVMLYYC) threads the bilayer. An N-linked (GlcNAc...) asparagine glycan is attached at asparagine 1460.

Belongs to the ABC transporter superfamily. ABCG family. PDR (TC 3.A.1.205) subfamily.

It is found in the cell membrane. The catalysed reaction is itraconazole(in) + ATP + H2O = itraconazole(out) + ADP + phosphate + H(+). The enzyme catalyses voriconazole(in) + ATP + H2O = voriconazole(out) + ADP + phosphate + H(+). It catalyses the reaction fluconazole(in) + ATP + H2O = fluconazole(out) + ADP + phosphate + H(+). Its function is as follows. Pleiotropic ABC efflux transporter involved in the basal level of azole susceptibility. Confers resistance to fluconazole, itraconazole and voriconazole. The polypeptide is ABC multidrug transporter atrI (Aspergillus fumigatus (strain ATCC MYA-4609 / CBS 101355 / FGSC A1100 / Af293) (Neosartorya fumigata)).